The sequence spans 588 residues: ATP-dependent lipid A-core flippase (588 aa).

Helical transmembrane passes span 23-43 (FWPV…IDAG), 56-76 (FITI…IGIT), 141-161 (DALT…TVMM), 162-182 (VICW…GIIV), 257-277 (LVIA…STVI), and 278-298 (TISA…IKPM). In terms of domain architecture, ABC transmembrane type-1 spans 28 to 310 (LLGVLANILY…LTTLNATIQR (283 aa)). The 235-residue stretch at 342–576 (IEFKHVYHAY…DGHYAQLYKV (235 aa)) folds into the ABC transporter domain. Position 375–382 (375–382 (GHSGSGKT)) interacts with ATP.

Belongs to the ABC transporter superfamily. Lipid exporter (TC 3.A.1.106) family. In terms of assembly, homodimer.

Its subcellular location is the cell inner membrane. It carries out the reaction ATP + H2O + lipid A-core oligosaccharideSide 1 = ADP + phosphate + lipid A-core oligosaccharideSide 2.. Functionally, involved in lipopolysaccharide (LPS) biosynthesis. Translocates lipid A-core from the inner to the outer leaflet of the inner membrane. Transmembrane domains (TMD) form a pore in the inner membrane and the ATP-binding domain (NBD) is responsible for energy generation. This is ATP-dependent lipid A-core flippase from Legionella pneumophila subsp. pneumophila (strain Philadelphia 1 / ATCC 33152 / DSM 7513).